A 115-amino-acid chain; its full sequence is Probable K(+)/H(+) antiporter subunit C (115 aa).

The next 3 helical transmembrane spans lie at I4–L21, V28–G47, and A75–A97.

It belongs to the CPA3 antiporters (TC 2.A.63) subunit C family. In terms of assembly, may form a hetero-oligomeric complex that consists of six subunits: PhaAB, PhaC, PhaD, PhaE, PhaF and PhaG.

Its subcellular location is the cell membrane. Functionally, part of a K(+) efflux system which is required for the adaptation of R.meliloti to alkaline pH as well as for the infection process during symbiotic nodule development. This Rhizobium meliloti (strain 1021) (Ensifer meliloti) protein is Probable K(+)/H(+) antiporter subunit C (phaC).